The sequence spans 436 residues: Chromosomal replication initiator protein DnaA (436 aa).

Residues 1-80 (MSHEAVWQHV…QAPRFELRVV (80 aa)) are domain I, interacts with DnaA modulators. Positions 80-100 (VPGVVVQEDIFQAAPAEAPRP) are domain II. The interval 101-317 (KLNPKYTFEN…GALMRAIAFA (217 aa)) is domain III, AAA+ region. Residues glycine 145, glycine 147, lysine 148, and threonine 149 each coordinate ATP. A domain IV, binds dsDNA region spans residues 318 to 436 (SLNGVELTRA…LLRTLREACT (119 aa)).

It belongs to the DnaA family. Oligomerizes as a right-handed, spiral filament on DNA at oriC.

The protein localises to the cytoplasm. It carries out the reaction ATP + H2O = ADP + phosphate + H(+). Its function is as follows. Plays an essential role in the initiation and regulation of chromosomal replication. ATP-DnaA binds to the origin of replication (oriC) to initiate formation of the DNA replication initiation complex once per cell cycle. Binds the DnaA box (a 9 base pair repeat at the origin) and separates the double-stranded (ds)DNA. Forms a right-handed helical filament on oriC DNA; dsDNA binds to the exterior of the filament while single-stranded (ss)DNA is stabiized in the filament's interior. The ATP-DnaA-oriC complex binds and stabilizes one strand of the AT-rich DNA unwinding element (DUE), permitting loading of DNA polymerase. After initiation quickly degrades to an ADP-DnaA complex that is not apt for DNA replication. Binds acidic phospholipids. Functionally, the DnaA box consensus is 5'-TTATC[CA]A[CA]A-3' in this bacterium; oriC consists of 13 clustered DnaA boxes and a 40 base pair AT-rich region. ATP-DnaA binds cooperatively to multiple DnaA boxes, while ADP-DnaA binds with low cooperativity to the individual DnaA boxes. About 16-18 DnaA protein molecules bind their sites in oriC. Has a slow ATPase activity. Binds linear and supercoiled DNA. In Thermus thermophilus (strain ATCC 27634 / DSM 579 / HB8), this protein is Chromosomal replication initiator protein DnaA.